The primary structure comprises 341 residues: Coiled-coil domain-containing protein 86 (341 aa).

A disordered region spans residues 1 to 341 (MGTPLRRSRR…QPPQRPVAKV (341 aa)). S18 carries the post-translational modification Phosphoserine. The segment covering 26–49 (EVSRAKRALVDFKSNPEETRELES) has biased composition (basic and acidic residues). S59 bears the Phosphoserine mark. Over residues 64–73 (PETSPESPCP) the composition is skewed to low complexity. T66 bears the Phosphothreonine mark. S67, S70, S81, S92, S103, S114, and S124 each carry phosphoserine. Over residues 105–114 (AGQTESNPES) the composition is skewed to polar residues. The segment covering 130-139 (EVAHAKEEVI) has biased composition (basic and acidic residues). 4 positions are modified to phosphoserine: S142, S169, S170, and S200. Positions 219 to 235 (GKPKSGRVWKDRSKKRF) are enriched in basic residues. The span at 254-298 (ERQERKLAKDFARHLEEEKQRRRQEKKERRAENLRRRLENERKAE) shows a compositional bias: basic and acidic residues. Positions 261-304 (AKDFARHLEEEKQRRRQEKKERRAENLRRRLENERKAEIVQVIR) form a coiled coil. The span at 307–317 (AKLKKAKKKQL) shows a compositional bias: basic residues. R323 carries the post-translational modification Citrulline.

In terms of processing, citrullinated by PADI4.

The protein localises to the nucleus. It localises to the chromosome. It is found in the nucleolus. Functionally, required for proper chromosome segregation during mitosis and error-free mitotic progression. The chain is Coiled-coil domain-containing protein 86 from Rattus norvegicus (Rat).